A 337-amino-acid polypeptide reads, in one-letter code: tRNA N6-adenosine threonylcarbamoyltransferase (337 aa).

Residues His-111 and His-115 each coordinate Fe cation. Substrate-binding positions include 134 to 138 (LVSGG), Asp-167, Gly-180, and Asn-272. Asp-300 provides a ligand contact to Fe cation.

The protein belongs to the KAE1 / TsaD family. Fe(2+) serves as cofactor.

It is found in the cytoplasm. It catalyses the reaction L-threonylcarbamoyladenylate + adenosine(37) in tRNA = N(6)-L-threonylcarbamoyladenosine(37) in tRNA + AMP + H(+). Its function is as follows. Required for the formation of a threonylcarbamoyl group on adenosine at position 37 (t(6)A37) in tRNAs that read codons beginning with adenine. Is involved in the transfer of the threonylcarbamoyl moiety of threonylcarbamoyl-AMP (TC-AMP) to the N6 group of A37, together with TsaE and TsaB. TsaD likely plays a direct catalytic role in this reaction. This chain is tRNA N6-adenosine threonylcarbamoyltransferase, found in Salmonella agona (strain SL483).